A 413-amino-acid polypeptide reads, in one-letter code: Serine/threonine transporter SstT (413 aa).

The next 9 membrane-spanning stretches (helical) occupy residues 14-34 (GSLV…ASFS), 44-64 (LGTL…FILV), 82-102 (IVLL…VVSF), 141-161 (ALAS…GVAL), 178-198 (GVTF…FGLV), 217-237 (LMVL…LIVF), 290-310 (IPLG…VLTL), 330-350 (LVAA…LLLI), and 356-376 (LFGI…IIGV).

Belongs to the dicarboxylate/amino acid:cation symporter (DAACS) (TC 2.A.23) family.

The protein resides in the cell inner membrane. The enzyme catalyses L-serine(in) + Na(+)(in) = L-serine(out) + Na(+)(out). It catalyses the reaction L-threonine(in) + Na(+)(in) = L-threonine(out) + Na(+)(out). In terms of biological role, involved in the import of serine and threonine into the cell, with the concomitant import of sodium (symport system). The protein is Serine/threonine transporter SstT of Edwardsiella ictaluri (strain 93-146).